The following is a 116-amino-acid chain: Venom nerve growth factor (116 aa).

3 disulfide bridges follow: C14–C78, C56–C106, and C66–C108. K86 is a binding site for a 1,2-diacyl-sn-glycerol.

This sequence belongs to the NGF-beta family. As to quaternary structure, homodimer; non-covalently linked. Interacts with NTRK1. Not glycosylated. Expressed by the venom gland.

Its subcellular location is the secreted. Its function is as follows. Nerve growth factor is important for the development and maintenance of the sympathetic and sensory nervous systems. It stimulates division and differentiation of sympathetic and embryonic sensory neurons as well as basal forebrain cholinergic neurons in the brain. Its relevance in the snake venom is not clear. However, it has been shown to inhibit metalloproteinase-dependent proteolysis of platelet glycoprotein Ib alpha, suggesting a metalloproteinase inhibition to prevent metalloprotease autodigestion and/or protection against prey proteases. Binds a lipid between the two protein chains in the homodimer. The lipid-bound form promotes histamine relase from mouse mast cells, contrary to the lipid-free form. The protein is Venom nerve growth factor of Naja atra (Chinese cobra).